We begin with the raw amino-acid sequence, 101 residues long: Small ribosomal subunit protein bS18c (101 aa).

It belongs to the bacterial ribosomal protein bS18 family. As to quaternary structure, part of the 30S ribosomal subunit.

Its subcellular location is the plastid. It localises to the chloroplast. This Lactuca sativa (Garden lettuce) protein is Small ribosomal subunit protein bS18c.